A 118-amino-acid polypeptide reads, in one-letter code: Ribonuclease P protein component (118 aa).

The protein belongs to the RnpA family. In terms of assembly, consists of a catalytic RNA component (M1 or rnpB) and a protein subunit.

The enzyme catalyses Endonucleolytic cleavage of RNA, removing 5'-extranucleotides from tRNA precursor.. Its function is as follows. RNaseP catalyzes the removal of the 5'-leader sequence from pre-tRNA to produce the mature 5'-terminus. It can also cleave other RNA substrates such as 4.5S RNA. The protein component plays an auxiliary but essential role in vivo by binding to the 5'-leader sequence and broadening the substrate specificity of the ribozyme. This chain is Ribonuclease P protein component, found in Shewanella oneidensis (strain ATCC 700550 / JCM 31522 / CIP 106686 / LMG 19005 / NCIMB 14063 / MR-1).